We begin with the raw amino-acid sequence, 264 residues long: Thiazole synthase (264 aa).

Residue lysine 98 is the Schiff-base intermediate with DXP of the active site. Residues glycine 159, 185–186 (AG), and 207–208 (AT) each bind 1-deoxy-D-xylulose 5-phosphate.

This sequence belongs to the ThiG family. In terms of assembly, homotetramer. Forms heterodimers with either ThiH or ThiS.

The protein localises to the cytoplasm. The enzyme catalyses [ThiS sulfur-carrier protein]-C-terminal-Gly-aminoethanethioate + 2-iminoacetate + 1-deoxy-D-xylulose 5-phosphate = [ThiS sulfur-carrier protein]-C-terminal Gly-Gly + 2-[(2R,5Z)-2-carboxy-4-methylthiazol-5(2H)-ylidene]ethyl phosphate + 2 H2O + H(+). It participates in cofactor biosynthesis; thiamine diphosphate biosynthesis. Its function is as follows. Catalyzes the rearrangement of 1-deoxy-D-xylulose 5-phosphate (DXP) to produce the thiazole phosphate moiety of thiamine. Sulfur is provided by the thiocarboxylate moiety of the carrier protein ThiS. In vitro, sulfur can be provided by H(2)S. In Mycobacterium marinum (strain ATCC BAA-535 / M), this protein is Thiazole synthase.